The following is a 354-amino-acid chain: 3-dehydroquinate synthase (354 aa).

NAD(+) contacts are provided by residues Asp-39, Tyr-45, 68 to 71 (EKTK), 100 to 104 (GATGD), 124 to 125 (TT), Lys-136, Lys-145, and 163 to 166 (FLKT). Zn(2+) is bound by residues Glu-178, His-242, and His-256.

It belongs to the sugar phosphate cyclases superfamily. Dehydroquinate synthase family. The cofactor is NAD(+). Co(2+) is required as a cofactor. Zn(2+) serves as cofactor.

It is found in the cytoplasm. It carries out the reaction 7-phospho-2-dehydro-3-deoxy-D-arabino-heptonate = 3-dehydroquinate + phosphate. It functions in the pathway metabolic intermediate biosynthesis; chorismate biosynthesis; chorismate from D-erythrose 4-phosphate and phosphoenolpyruvate: step 2/7. Catalyzes the conversion of 3-deoxy-D-arabino-heptulosonate 7-phosphate (DAHP) to dehydroquinate (DHQ). The chain is 3-dehydroquinate synthase from Staphylococcus aureus (strain MRSA252).